We begin with the raw amino-acid sequence, 131 residues long: Small ribosomal subunit protein uS8 (131 aa).

It belongs to the universal ribosomal protein uS8 family. In terms of assembly, part of the 30S ribosomal subunit. Contacts proteins S5 and S12.

In terms of biological role, one of the primary rRNA binding proteins, it binds directly to 16S rRNA central domain where it helps coordinate assembly of the platform of the 30S subunit. This chain is Small ribosomal subunit protein uS8, found in Blochmanniella pennsylvanica (strain BPEN).